The chain runs to 352 residues: Protein-glutamate methylesterase/protein-glutamine glutaminase 2 (352 aa).

In terms of domain architecture, Response regulatory spans 6-124; sequence KVLIVEDSLV…NAGYDTMAAK (119 aa). At D57 the chain carries 4-aspartylphosphate. A CheB-type methylesterase domain is found at 162-343; the sequence is PGTYSMVGIV…LPLPAIAARL (182 aa). Residues S173, H200, and D292 contribute to the active site.

The protein belongs to the CheB family. In terms of processing, phosphorylated by CheA. Phosphorylation of the N-terminal regulatory domain activates the methylesterase activity.

It is found in the cytoplasm. It catalyses the reaction [protein]-L-glutamate 5-O-methyl ester + H2O = L-glutamyl-[protein] + methanol + H(+). The enzyme catalyses L-glutaminyl-[protein] + H2O = L-glutamyl-[protein] + NH4(+). Involved in chemotaxis. Part of a chemotaxis signal transduction system that modulates chemotaxis in response to various stimuli. Catalyzes the demethylation of specific methylglutamate residues introduced into the chemoreceptors (methyl-accepting chemotaxis proteins or MCP) by CheR. Also mediates the irreversible deamidation of specific glutamine residues to glutamic acid. The sequence is that of Protein-glutamate methylesterase/protein-glutamine glutaminase 2 from Paramagnetospirillum magneticum (strain ATCC 700264 / AMB-1) (Magnetospirillum magneticum).